We begin with the raw amino-acid sequence, 281 residues long: Short neuropeptide F (281 aa).

A signal peptide spans 1–30; sequence MFHLKRELSQGCALALICLVSLQMQQPAQA. The propeptide occupies 31–64; that stretch reads EVSSAQGTPLSNLYDNLLQREYAGPVVFPNHQVE. Phenylalanine amide occurs at positions 77 and 111. Residues 115–165 constitute a propeptide that is removed on maturation; that stretch reads DPSLPQMRRTAYDDLLERELTLNSQQQQQQLGTEPDSDLGADYDGLYERVV. Positions 137–156 are disordered; it reads NSQQQQQQLGTEPDSDLGAD. Tryptophan amide is present on W173. A propeptide spanning residues 176-246 is cleaved from the precursor; that stretch reads SVPQFEANNA…NDTSEFQREV (71 aa). Positions 226–281 are disordered; it reads ANDEDTDTDLNNDTSEFQREVRKPMRLRWGRSTGKAPSEQKHTPEETSSIPPKTQN. Residue W254 is modified to Tryptophan amide. Residues 257–281 constitute a propeptide that is removed on maturation; it reads STGKAPSEQKHTPEETSSIPPKTQN. Over residues 271 to 281 the composition is skewed to polar residues; sequence ETSSIPPKTQN.

It belongs to the NPY family. In terms of tissue distribution, stage 17 embryos show expression in the two brain hemispheres (neural cells located in the dorsal posterior region), the connected ventral ganglion (pairs of neural cells along the ventral midline) and the peripheral nervous system (expressed in the antennal-maxillary sensory cells). In the brain hemispheres of the feeding third instar larva, expression in neural cells is located in the dorsal-anterior region of the protocerebrum. In the larval ventral ganglion, expression is seen in the neural cells located in the subesophagial region, along the ventral midline and in thoracic and abdominal segments. In the adult brain, expression is seen in the medulla and the mushroom body calyx (at protein level).

The protein localises to the secreted. In terms of biological role, plays a role in controlling food intake and regulating body size. The polypeptide is Short neuropeptide F (sNPF) (Drosophila melanogaster (Fruit fly)).